We begin with the raw amino-acid sequence, 444 residues long: tRNA pseudouridine synthase Pus10 (444 aa).

Asp-265 functions as the Nucleophile in the catalytic mechanism. Tyr-333 and Tyr-405 together coordinate substrate.

The protein belongs to the pseudouridine synthase Pus10 family.

It catalyses the reaction uridine(54) in tRNA = pseudouridine(54) in tRNA. The enzyme catalyses uridine(55) in tRNA = pseudouridine(55) in tRNA. Responsible for synthesis of pseudouridine from uracil-54 and uracil-55 in the psi GC loop of transfer RNAs. The polypeptide is tRNA pseudouridine synthase Pus10 (Thermofilum pendens (strain DSM 2475 / Hrk 5)).